A 486-amino-acid polypeptide reads, in one-letter code: MTHYIQGQWHTGNGHDVTSINPANGETIWCGKTATAEQVNTAVEAARAAQFDWFMLGFDARLAIVEAYRSQLEANKAELAETIAQETGKPQWETATEVGAMIGKIALSAAAYHKRTGTEANDTPAGRAVIRHKPHGVVAVFGPYNFPGHLPNGHIVPALLAGNTVIFKPSELTPKVAELMVKLWDKAGLPAGVINLVQGEVDTGKALASHPQIDGLFFTGSSRTGHLLHQQYAGHPGKILALEMGGNNPLIIKGVQDIKAAVHDILQSAYISSGQRCTCARRLYVEQGEQGDALIALLVDAVKQIKVGPWNAQPQPFMGSMISETAAKGMVAAQANLLDLGGKVLVELTHLQAGTGLVSPGLIDVTAIDVLPDEEYFGPLLQLVRYGDFDQAIKLANQTRYGLSAGLLADSREDYDYFLARIRAGIVNWNKQITGASGAAPFGGVGASGNHRASAFYAADYCAYPVASVEADAVSLPATLSPGLSL.

Position 220-225 (220-225 (GSSRTG)) interacts with NAD(+). Residues E243 and C277 contribute to the active site.

This sequence belongs to the aldehyde dehydrogenase family. AstD subfamily.

The catalysed reaction is N-succinyl-L-glutamate 5-semialdehyde + NAD(+) + H2O = N-succinyl-L-glutamate + NADH + 2 H(+). It functions in the pathway amino-acid degradation; L-arginine degradation via AST pathway; L-glutamate and succinate from L-arginine: step 4/5. Functionally, catalyzes the NAD-dependent reduction of succinylglutamate semialdehyde into succinylglutamate. The sequence is that of N-succinylglutamate 5-semialdehyde dehydrogenase from Shewanella putrefaciens (strain CN-32 / ATCC BAA-453).